Reading from the N-terminus, the 198-residue chain is uncharacterized protein (198 aa).

Its subcellular location is the plastid. The protein localises to the chloroplast. This is an uncharacterized protein from Antithamnion sp. (Red alga).